The following is a 612-amino-acid chain: Probable Xaa-Pro aminopeptidase P (612 aa).

Mn(2+)-binding residues include aspartate 409, aspartate 420, glutamate 518, and glutamate 532.

The protein belongs to the peptidase M24B family. The cofactor is Mn(2+).

It catalyses the reaction Release of any N-terminal amino acid, including proline, that is linked to proline, even from a dipeptide or tripeptide.. In terms of biological role, catalyzes the removal of a penultimate prolyl residue from the N-termini of peptides. The chain is Probable Xaa-Pro aminopeptidase P (AMPP) from Verticillium alfalfae (strain VaMs.102 / ATCC MYA-4576 / FGSC 10136) (Verticillium wilt of alfalfa).